We begin with the raw amino-acid sequence, 594 residues long: Insulin-like growth factor 2 mRNA-binding protein 3-A (594 aa).

2 RRM domains span residues 2–75 (NKLY…HSVP) and 81–156 (RKLQ…YIPD). Residues 161–177 (PQAPSQQLQQQPQQQHP) are compositionally biased toward low complexity. Residues 161 to 206 (PQAPSQQLQQQPQQQHPQGRRGFGQRGPARQGSPGAAARPKPQTEV) are disordered. 2 KH domains span residues 205–270 (EVPL…CKII) and 286–353 (EIPL…EEEI). Residues 392–415 (GMPPPSVGVPSPTSSTSYPPFGQQ) form a disordered region. Residues 399-411 (GVPSPTSSTSYPP) are compositionally biased toward low complexity. 2 consecutive KH domains span residues 418–483 (SETV…QGRI) and 500–566 (KLET…QRKI).

This sequence belongs to the RRM IMP/VICKZ family. In terms of assembly, homodimer and multimer. Associates with microtubules. Interaction with a translocation machinery protein TRAPA of the endoplasmic reticulum. Component of a mRNP complex, at least composed of DAZAP1, IGF2BP3, STAU and VgRBP60. The mRNP complex with DAZAP1, IGF2BP3, STAU and VgRBP60 is only found in the cytoplasm. Interacts with a hnRNP 1 related RNA transport protein VgRBP60 both in the nucleus (in a RNA-independent manner) and the cytoplasm (in a RNA-dependent manner). Found in a B3 activator complex.

Its subcellular location is the nucleus. It is found in the cytoplasm. It localises to the endoplasmic reticulum. Functionally, RNA-binding protein that acts as a regulator of mRNA transport and localization. Binds to the RNA sequence motif 5'-UUCAC-3'. Preferentially binds to N6-methyladenosine (m6A)-containing mRNAs and increases their stability. Mediates the specific association of Vg1 RNA to microtubules. Binds specifically to the vegetal localization elements (VLE or VgLE) in the 3'-UTR of Vg1 and VegT mRNAs. Binds to the Vg1 and VegT mRNAs in both the nucleus and the cytoplasm. May regulate mRNA translation. Acts as a transcription regulator. Binds to the 5'-[TA]GGTTACT-3' motif within element 3 of the TFIIIA gene promoter. The chain is Insulin-like growth factor 2 mRNA-binding protein 3-A (igf2bp3-a) from Xenopus laevis (African clawed frog).